The chain runs to 172 residues: 3-hydroxydecanoyl-[acyl-carrier-protein] dehydratase (172 aa).

Residue His71 is part of the active site.

This sequence belongs to the thioester dehydratase family. FabA subfamily. As to quaternary structure, homodimer.

It is found in the cytoplasm. It catalyses the reaction a (3R)-hydroxyacyl-[ACP] = a (2E)-enoyl-[ACP] + H2O. It carries out the reaction (3R)-hydroxydecanoyl-[ACP] = (2E)-decenoyl-[ACP] + H2O. The enzyme catalyses (2E)-decenoyl-[ACP] = (3Z)-decenoyl-[ACP]. Its pathway is lipid metabolism; fatty acid biosynthesis. Necessary for the introduction of cis unsaturation into fatty acids. Catalyzes the dehydration of (3R)-3-hydroxydecanoyl-ACP to E-(2)-decenoyl-ACP and then its isomerization to Z-(3)-decenoyl-ACP. Can catalyze the dehydratase reaction for beta-hydroxyacyl-ACPs with saturated chain lengths up to 16:0, being most active on intermediate chain length. This is 3-hydroxydecanoyl-[acyl-carrier-protein] dehydratase from Pectobacterium carotovorum subsp. carotovorum (strain PC1).